The sequence spans 111 residues: Secreted transmembrane peptide 5 (111 aa).

Residues 1-46 form the signal peptide; that stretch reads MRLSVFYIFITRLAMTKNATKNEMGSKSPNIVALVLPLLLILYTLS. The short motif at 66 to 79 is the SCOOP motif element; the sequence is IVWTPHSNSCGGSP. The short motif at 72 to 74 is the SxS motif essential for MIK2 binding element; sequence SNS. The interval 89-111 is disordered; it reads TTGRPCRRSRPPGTNIPVSDQSP.

This sequence belongs to the serine rich endogenous peptide (SCOOP) phytocytokine family. Interacts with MIK2 (via extracellular leucine-rich repeat domain); this interaction triggers the formation of complex between MIK2 and the BAK1/SERK3 and SERK4 coreceptors, and subsequent BAK1 activation by phosphorylation. As to expression, mostly expressed in leaves, and, to a lower extent, in roots, stems, siliques, seeds and flowers.

It is found in the cell membrane. The protein resides in the secreted. The protein localises to the extracellular space. It localises to the apoplast. Brassicaceae-specific phytocytokine (plant endogenous peptide released into the apoplast) perceived by MIK2 in a BAK1/SERK3 and SERK4 coreceptors-dependent manner, that modulates various physiological and antimicrobial processes including growth prevention and reactive oxygen species (ROS) response regulation. The chain is Secreted transmembrane peptide 5 from Arabidopsis thaliana (Mouse-ear cress).